Reading from the N-terminus, the 214-residue chain is ATP phosphoribosyltransferase (214 aa).

The protein belongs to the ATP phosphoribosyltransferase family. Short subfamily. As to quaternary structure, heteromultimer composed of HisG and HisZ subunits.

It localises to the cytoplasm. It carries out the reaction 1-(5-phospho-beta-D-ribosyl)-ATP + diphosphate = 5-phospho-alpha-D-ribose 1-diphosphate + ATP. The protein operates within amino-acid biosynthesis; L-histidine biosynthesis; L-histidine from 5-phospho-alpha-D-ribose 1-diphosphate: step 1/9. Functionally, catalyzes the condensation of ATP and 5-phosphoribose 1-diphosphate to form N'-(5'-phosphoribosyl)-ATP (PR-ATP). Has a crucial role in the pathway because the rate of histidine biosynthesis seems to be controlled primarily by regulation of HisG enzymatic activity. This is ATP phosphoribosyltransferase from Streptococcus gordonii (strain Challis / ATCC 35105 / BCRC 15272 / CH1 / DL1 / V288).